A 92-amino-acid chain; its full sequence is Small ribosomal subunit protein uS19 (92 aa).

Belongs to the universal ribosomal protein uS19 family.

Protein S19 forms a complex with S13 that binds strongly to the 16S ribosomal RNA. The protein is Small ribosomal subunit protein uS19 of Bifidobacterium animalis subsp. lactis (strain AD011).